Here is a 68-residue protein sequence, read N- to C-terminus: MDARLLEILVCPICKGPLHYDRGAQELVCHADKLAYPIRDGIPVMLVDEARQTVEGTPVDPAGPAQGR.

This sequence belongs to the UPF0434 family.

The polypeptide is UPF0434 protein BURPS668_0926 (Burkholderia pseudomallei (strain 668)).